We begin with the raw amino-acid sequence, 190 residues long: Holliday junction branch migration complex subunit RuvA (190 aa).

The segment at 1 to 63 is domain I; that stretch reads MLDFIKGKVI…EESIEIYGFL (63 aa). Positions 64–139 are domain II; it reads ESSERDLFEE…ILPSLQYEKD (76 aa). Residue aspartate 139 is a region of interest, flexible linker. A domain III region spans residues 139-190; that stretch reads DQKYDDILSALLNLGYKRLEAKEVLDKIYNNEKDEATIIRESLSILAGKDGK.

The protein belongs to the RuvA family. In terms of assembly, homotetramer. Forms an RuvA(8)-RuvB(12)-Holliday junction (HJ) complex. HJ DNA is sandwiched between 2 RuvA tetramers; dsDNA enters through RuvA and exits via RuvB. An RuvB hexamer assembles on each DNA strand where it exits the tetramer. Each RuvB hexamer is contacted by two RuvA subunits (via domain III) on 2 adjacent RuvB subunits; this complex drives branch migration. In the full resolvosome a probable DNA-RuvA(4)-RuvB(12)-RuvC(2) complex forms which resolves the HJ.

It localises to the cytoplasm. The RuvA-RuvB-RuvC complex processes Holliday junction (HJ) DNA during genetic recombination and DNA repair, while the RuvA-RuvB complex plays an important role in the rescue of blocked DNA replication forks via replication fork reversal (RFR). RuvA specifically binds to HJ cruciform DNA, conferring on it an open structure. The RuvB hexamer acts as an ATP-dependent pump, pulling dsDNA into and through the RuvAB complex. HJ branch migration allows RuvC to scan DNA until it finds its consensus sequence, where it cleaves and resolves the cruciform DNA. This chain is Holliday junction branch migration complex subunit RuvA, found in Thermodesulfovibrio yellowstonii (strain ATCC 51303 / DSM 11347 / YP87).